A 592-amino-acid chain; its full sequence is Bifunctional enzyme BirA/CoaX (592 aa).

The biotin--protein ligase stretch occupies residues 1–329; the sequence is MTVLKPSHWR…ISLRPDNRSV (329 aa). Residues 83-259 enclose the BPL/LPL catalytic domain; sequence QTALKHECAS…ELGAVLEQYA (177 aa). Positions 336 to 592 are type III pantothenate kinase; sequence DSERFLLLEG…AAEGGESEHA (257 aa). 344–351 is an ATP binding site; the sequence is EGGNSRLK. Substrate contacts are provided by residues Tyr426 and 433 to 436; that span reads GSDR. Asp435 (proton acceptor) is an active-site residue. Thr458 is a binding site for ATP. Residue Thr508 coordinates substrate.

This sequence in the N-terminal section; belongs to the biotin--protein ligase family. It in the C-terminal section; belongs to the type III pantothenate kinase family. The cofactor is NH4(+). It depends on K(+) as a cofactor.

Its subcellular location is the cytoplasm. It carries out the reaction biotin + L-lysyl-[protein] + ATP = N(6)-biotinyl-L-lysyl-[protein] + AMP + diphosphate + H(+). The catalysed reaction is (R)-pantothenate + ATP = (R)-4'-phosphopantothenate + ADP + H(+). It participates in cofactor biosynthesis; coenzyme A biosynthesis; CoA from (R)-pantothenate: step 1/5. In terms of biological role, activates biotin to form biotinyl-5'-adenylate and transfers the biotin moiety to biotin-accepting proteins. Catalyzes the phosphorylation of pantothenate (Pan), the first step in CoA biosynthesis. The polypeptide is Bifunctional enzyme BirA/CoaX (birA/coaX) (Neisseria gonorrhoeae (strain ATCC 700825 / FA 1090)).